The chain runs to 167 residues: Peptidyl-prolyl cis-trans isomerase-like 3 (167 aa).

Residues 1-153 (MSVTLHTNLG…QEIKLLNVTV (153 aa)) enclose the PPIase cyclophilin-type domain.

Belongs to the cyclophilin-type PPIase family. PPIL3 subfamily.

The enzyme catalyses [protein]-peptidylproline (omega=180) = [protein]-peptidylproline (omega=0). In terms of biological role, PPIases accelerate the folding of proteins. It catalyzes the cis-trans isomerization of proline imidic peptide bonds in oligopeptides. This Cryptococcus neoformans var. neoformans serotype D (strain B-3501A) (Filobasidiella neoformans) protein is Peptidyl-prolyl cis-trans isomerase-like 3 (CYP10).